The sequence spans 94 residues: Aspartyl/glutamyl-tRNA(Asn/Gln) amidotransferase subunit C (94 aa).

The protein belongs to the GatC family. Heterotrimer of A, B and C subunits.

The enzyme catalyses L-glutamyl-tRNA(Gln) + L-glutamine + ATP + H2O = L-glutaminyl-tRNA(Gln) + L-glutamate + ADP + phosphate + H(+). The catalysed reaction is L-aspartyl-tRNA(Asn) + L-glutamine + ATP + H2O = L-asparaginyl-tRNA(Asn) + L-glutamate + ADP + phosphate + 2 H(+). Allows the formation of correctly charged Asn-tRNA(Asn) or Gln-tRNA(Gln) through the transamidation of misacylated Asp-tRNA(Asn) or Glu-tRNA(Gln) in organisms which lack either or both of asparaginyl-tRNA or glutaminyl-tRNA synthetases. The reaction takes place in the presence of glutamine and ATP through an activated phospho-Asp-tRNA(Asn) or phospho-Glu-tRNA(Gln). In Desulfitobacterium hafniense (strain DSM 10664 / DCB-2), this protein is Aspartyl/glutamyl-tRNA(Asn/Gln) amidotransferase subunit C.